The chain runs to 291 residues: Phosphate import ATP-binding protein PstB (291 aa).

A disordered region spans residues 1–21 (MANKQIIDKNDDLQAHTDRND). Residues 45–286 (YSTKNLDLWY…PSDKQTEDYI (242 aa)) enclose the ABC transporter domain. Residue 77 to 84 (GPSGCGKS) participates in ATP binding.

The protein belongs to the ABC transporter superfamily. Phosphate importer (TC 3.A.1.7) family. In terms of assembly, the complex is composed of two ATP-binding proteins (PstB), two transmembrane proteins (PstC and PstA) and a solute-binding protein (PstS).

The protein resides in the cell membrane. The enzyme catalyses phosphate(out) + ATP + H2O = ADP + 2 phosphate(in) + H(+). Its function is as follows. Part of the ABC transporter complex PstSACB involved in phosphate import. Responsible for energy coupling to the transport system. The protein is Phosphate import ATP-binding protein PstB of Staphylococcus saprophyticus subsp. saprophyticus (strain ATCC 15305 / DSM 20229 / NCIMB 8711 / NCTC 7292 / S-41).